Reading from the N-terminus, the 278-residue chain is Transcription initiation factor TFIID subunit 9 (278 aa).

A disordered region spans residues 193-278 (TTTKTVGSSG…EEEEFEFVTN (86 aa)). Positions 200-210 (SSGGSGGGGGQ) are enriched in gly residues. Residues 231–240 (AAAVGSIAGA) show a composition bias toward low complexity. A compositionally biased stretch (gly residues) spans 241-259 (SGSGAGSASGGGGGGGSSG). The segment covering 269 to 278 (EEEEFEFVTN) has biased composition (acidic residues).

The protein belongs to the TAF9 family. In terms of assembly, belongs to the TFIID complex which is composed of TATA binding protein (Tbp) and a number of TBP-associated factors (TAFs). Taf9 and Taf6 exist as a heterotetramer. Interacts with e(y)2.

It is found in the nucleus. Its function is as follows. TFIID is a multimeric protein complex that plays a central role in mediating promoter responses to various activators and repressors. In Drosophila melanogaster (Fruit fly), this protein is Transcription initiation factor TFIID subunit 9.